The chain runs to 438 residues: ATP-dependent RNA helicase RhlB (438 aa).

The short motif at 9–37 is the Q motif element; the sequence is QRFADLPLHPEVKQALAENGFEFCTPIQA. The 180-residue stretch at 40–219 folds into the Helicase ATP-binding domain; that stretch reads LPVLLQSKDI…YDHMNEPVKV (180 aa). 53–60 is a binding site for ATP; that stretch reads AQTGTGKT. The DEAD box signature appears at 165-168; the sequence is DEAD. In terms of domain architecture, Helicase C-terminal spans 243–390; that stretch reads KMRLLLTLIE…VSNYDSEALL (148 aa). A disordered region spans residues 395 to 438; it reads TPAKIHRKHPSGTRNLRDRSGASRPGAQRSGARPPRHDRTRRHS. A compositionally biased stretch (basic residues) spans 428–438; it reads PPRHDRTRRHS.

It belongs to the DEAD box helicase family. RhlB subfamily. As to quaternary structure, component of the RNA degradosome, which is a multiprotein complex involved in RNA processing and mRNA degradation.

It localises to the cytoplasm. It catalyses the reaction ATP + H2O = ADP + phosphate + H(+). DEAD-box RNA helicase involved in RNA degradation. Has RNA-dependent ATPase activity and unwinds double-stranded RNA. The sequence is that of ATP-dependent RNA helicase RhlB from Shewanella baltica (strain OS185).